We begin with the raw amino-acid sequence, 450 residues long: Phosphoglucosamine mutase (450 aa).

The active-site Phosphoserine intermediate is the S97. The Mg(2+) site is built by S97, D236, D238, and D240. Phosphoserine is present on S97.

The protein belongs to the phosphohexose mutase family. Mg(2+) serves as cofactor. Post-translationally, activated by phosphorylation.

It catalyses the reaction alpha-D-glucosamine 1-phosphate = D-glucosamine 6-phosphate. Catalyzes the conversion of glucosamine-6-phosphate to glucosamine-1-phosphate. In Prochlorococcus marinus (strain MIT 9312), this protein is Phosphoglucosamine mutase.